The sequence spans 441 residues: Serine/threonine-protein phosphatase 2A activator 1 (441 aa).

2 stretches are compositionally biased toward polar residues: residues 66 to 75 (NIPPSNTTHS) and 421 to 432 (QRQDDLNSTTYR). 2 disordered regions span residues 66-100 (NIPP…SSNQ) and 421-441 (QRQD…LGRN).

It belongs to the PTPA-type PPIase family.

The protein resides in the cytoplasm. Its subcellular location is the nucleus. It carries out the reaction [protein]-peptidylproline (omega=180) = [protein]-peptidylproline (omega=0). Functionally, PPIases accelerate the folding of proteins. It catalyzes the cis-trans isomerization of proline imidic peptide bonds in oligopeptides. Acts as a regulatory subunit for PP2A-like phosphatases modulating their activity or substrate specificity, probably by inducing a conformational change in the catalytic subunit, a direct target of the PPIase. Can reactivate inactive phosphatase PP2A-phosphatase methylesterase complexes (PP2Ai) in presence of ATP and Mg(2+) by dissociating the inactive form from the complex. This is Serine/threonine-protein phosphatase 2A activator 1 (RRD1) from Debaryomyces hansenii (strain ATCC 36239 / CBS 767 / BCRC 21394 / JCM 1990 / NBRC 0083 / IGC 2968) (Yeast).